A 217-amino-acid polypeptide reads, in one-letter code: Phosphatidylserine decarboxylase proenzyme (217 aa).

S187 acts as the Schiff-base intermediate with substrate; via pyruvic acid in catalysis. A Pyruvic acid (Ser); by autocatalysis modification is found at S187.

It belongs to the phosphatidylserine decarboxylase family. PSD-A subfamily. In terms of assembly, heterodimer of a large membrane-associated beta subunit and a small pyruvoyl-containing alpha subunit. The cofactor is pyruvate. In terms of processing, is synthesized initially as an inactive proenzyme. Formation of the active enzyme involves a self-maturation process in which the active site pyruvoyl group is generated from an internal serine residue via an autocatalytic post-translational modification. Two non-identical subunits are generated from the proenzyme in this reaction, and the pyruvate is formed at the N-terminus of the alpha chain, which is derived from the carboxyl end of the proenzyme. The post-translation cleavage follows an unusual pathway, termed non-hydrolytic serinolysis, in which the side chain hydroxyl group of the serine supplies its oxygen atom to form the C-terminus of the beta chain, while the remainder of the serine residue undergoes an oxidative deamination to produce ammonia and the pyruvoyl prosthetic group on the alpha chain.

It localises to the cell membrane. It catalyses the reaction a 1,2-diacyl-sn-glycero-3-phospho-L-serine + H(+) = a 1,2-diacyl-sn-glycero-3-phosphoethanolamine + CO2. Its pathway is phospholipid metabolism; phosphatidylethanolamine biosynthesis; phosphatidylethanolamine from CDP-diacylglycerol: step 2/2. In terms of biological role, catalyzes the formation of phosphatidylethanolamine (PtdEtn) from phosphatidylserine (PtdSer). In Thermobifida fusca (strain YX), this protein is Phosphatidylserine decarboxylase proenzyme.